The following is a 447-amino-acid chain: ATP-dependent protease ATPase subunit HslU (447 aa).

ATP-binding positions include isoleucine 17 and 59 to 64 (GVGKTE). A disordered region spans residues 136 to 160 (PPARGGFQGEPTAEEKPTEKKESAT). A compositionally biased stretch (basic and acidic residues) spans 148–159 (AEEKPTEKKESA). Residues aspartate 260, glutamate 325, and arginine 397 each coordinate ATP.

Belongs to the ClpX chaperone family. HslU subfamily. In terms of assembly, a double ring-shaped homohexamer of HslV is capped on each side by a ring-shaped HslU homohexamer. The assembly of the HslU/HslV complex is dependent on binding of ATP.

Its subcellular location is the cytoplasm. ATPase subunit of a proteasome-like degradation complex; this subunit has chaperone activity. The binding of ATP and its subsequent hydrolysis by HslU are essential for unfolding of protein substrates subsequently hydrolyzed by HslV. HslU recognizes the N-terminal part of its protein substrates and unfolds these before they are guided to HslV for hydrolysis. The sequence is that of ATP-dependent protease ATPase subunit HslU from Coxiella burnetii (strain RSA 331 / Henzerling II).